A 411-amino-acid chain; its full sequence is UPF0597 protein Fnod_1278 (411 aa).

The protein belongs to the UPF0597 family.

The chain is UPF0597 protein Fnod_1278 from Fervidobacterium nodosum (strain ATCC 35602 / DSM 5306 / Rt17-B1).